A 533-amino-acid polypeptide reads, in one-letter code: MPMTMSQAFIGNFLGNSPKWYKIAILSFLIINPILFFYVSPFVAGWVLVLEFIFTLAMALKCYPLQPGGLLAIQAVAIGMTSASQVLHEIEANLEVLLLLVFMVAGIYFMKQLLLFAFTKMITKVRSKILVSLMFCLASAFLSAFLDALTVIAVIITVAVGFYSIYHKVASGKDFSADHDHTSEGKNEDGENQLNEEELESFRGFLRNLLMHAGVGTALGGVCTMVGEPQNLIIAAQANWQFGEFAIRMSPVTVPVLFAGILTCFLVEKLRWFGYGAQLPEAVHKILCDYAAYEDARRTNKDKMKLVIQAFVGVWLIAGLALHLASVGLIGLSVIILTTAFNGITDEHALGKAFEEALPFTALLAVFFAVVAVIIDQQLFGPVIQWALNHEGNTQLVIFYIANGLLSMVSDNVFVGTVYINEVKAALINGQITRDQFDLLAVAINTGTNLPSVATPNGQAAFLFLLTSALAPLIRLSYGRMVWMALPYTIVLSIVGVMAIESGFLEQMTQYFYDSHAIIHHSVKEALAPAAAH.

The next 11 membrane-spanning stretches (helical) occupy residues 10–30, 67–87, 96–116, 131–165, 209–229, 247–267, 310–330, 355–375, 396–416, 454–474, and 481–501; these read IGNFLGNSPKWYKIAILSFLI, PGGLLAIQAVAIGMTSASQVL, VLLLLVFMVAGIYFMKQLLLF, VSLMFCLASAFLSAFLDALTVIAVIITVAVGFYSI, LLMHAGVGTALGGVCTMVGEP, IRMSPVTVPVLFAGILTCFLV, AFVGVWLIAGLALHLASVGLI, EEALPFTALLAVFFAVVAVII, LVIFYIANGLLSMVSDNVFVG, ATPNGQAAFLFLLTSALAPLI, and MVWMALPYTIVLSIVGVMAIE.

Belongs to the NhaB Na(+)/H(+) (TC 2.A.34) antiporter family.

The protein resides in the cell inner membrane. It carries out the reaction 2 Na(+)(in) + 3 H(+)(out) = 2 Na(+)(out) + 3 H(+)(in). Its function is as follows. Na(+)/H(+) antiporter that extrudes sodium in exchange for external protons. This Shewanella sp. (strain MR-4) protein is Na(+)/H(+) antiporter NhaB.